The sequence spans 129 residues: 3-aminoacrylate deaminase RutC (129 aa).

This sequence belongs to the RutC family.

It catalyses the reaction (Z)-3-aminoacrylate + H2O + H(+) = 3-oxopropanoate + NH4(+). Its function is as follows. Involved in pyrimidine catabolism. Catalyzes the deamination of 3-aminoacrylate to malonic semialdehyde, a reaction that can also occur spontaneously. RutC may facilitate the reaction and modulate the metabolic fitness, rather than catalyzing essential functions. In Caulobacter segnis (strain ATCC 21756 / DSM 7131 / JCM 7823 / NBRC 15250 / LMG 17158 / TK0059) (Mycoplana segnis), this protein is 3-aminoacrylate deaminase RutC.